The following is a 340-amino-acid chain: MKSFLSSCTTGGCGAKIGPGELSKVLSGLPVFQDPQLLVGFDASDDAAVYQINEDTAIVSTVDFFTPMVEDPRTFGRIAAANALSDVYAMGGSPLFALNLVCYPEREDIQDLGEILAGGAEKLQEAGAVLCGGHSIYDREPKYGLAVTGRLNPRQIWKNNTPQPGDRLILTKPLGVGIVMAALRGEMAEAAAVEAALASMQRLNKYAAEKARDFPIHACTDITGFGLLAHTREMAGGSTTIVLYPSALPYIAQAYTYAQGYLLTAAGQRNRNFMEGAVEFGDTPFPLQELMLDPQTSGGLLLSVPGDCAQEALRAIQETEPQAALIGEVLPRQDFPILLG.

Residue C13 is part of the active site. Residues K16 and 43–45 (ASD) each bind ATP. Residue D46 participates in Mg(2+) binding. Residues D63, D86, and 133-135 (GHS) contribute to the ATP site. D86 serves as a coordination point for Mg(2+). Position 221 (D221) interacts with Mg(2+).

Belongs to the selenophosphate synthase 1 family. Class I subfamily. In terms of assembly, homodimer. Mg(2+) is required as a cofactor.

It carries out the reaction hydrogenselenide + ATP + H2O = selenophosphate + AMP + phosphate + 2 H(+). Functionally, synthesizes selenophosphate from selenide and ATP. This Desulfitobacterium hafniense (strain DSM 10664 / DCB-2) protein is Selenide, water dikinase.